The chain runs to 211 residues: Thiamine-phosphate synthase (211 aa).

Residues 36–40 (QLRDK) and N68 each bind 4-amino-2-methyl-5-(diphosphooxymethyl)pyrimidine. Residues D69 and D88 each contribute to the Mg(2+) site. S107 provides a ligand contact to 4-amino-2-methyl-5-(diphosphooxymethyl)pyrimidine. Position 133–135 (133–135 (TKS)) interacts with 2-[(2R,5Z)-2-carboxy-4-methylthiazol-5(2H)-ylidene]ethyl phosphate. Position 136 (K136) interacts with 4-amino-2-methyl-5-(diphosphooxymethyl)pyrimidine. 2-[(2R,5Z)-2-carboxy-4-methylthiazol-5(2H)-ylidene]ethyl phosphate contacts are provided by residues G164 and 184–185 (IS).

Belongs to the thiamine-phosphate synthase family. The cofactor is Mg(2+).

It carries out the reaction 2-[(2R,5Z)-2-carboxy-4-methylthiazol-5(2H)-ylidene]ethyl phosphate + 4-amino-2-methyl-5-(diphosphooxymethyl)pyrimidine + 2 H(+) = thiamine phosphate + CO2 + diphosphate. The enzyme catalyses 2-(2-carboxy-4-methylthiazol-5-yl)ethyl phosphate + 4-amino-2-methyl-5-(diphosphooxymethyl)pyrimidine + 2 H(+) = thiamine phosphate + CO2 + diphosphate. The catalysed reaction is 4-methyl-5-(2-phosphooxyethyl)-thiazole + 4-amino-2-methyl-5-(diphosphooxymethyl)pyrimidine + H(+) = thiamine phosphate + diphosphate. Its pathway is cofactor biosynthesis; thiamine diphosphate biosynthesis; thiamine phosphate from 4-amino-2-methyl-5-diphosphomethylpyrimidine and 4-methyl-5-(2-phosphoethyl)-thiazole: step 1/1. In terms of biological role, condenses 4-methyl-5-(beta-hydroxyethyl)thiazole monophosphate (THZ-P) and 2-methyl-4-amino-5-hydroxymethyl pyrimidine pyrophosphate (HMP-PP) to form thiamine monophosphate (TMP). The chain is Thiamine-phosphate synthase from Halalkalibacterium halodurans (strain ATCC BAA-125 / DSM 18197 / FERM 7344 / JCM 9153 / C-125) (Bacillus halodurans).